The following is a 1346-amino-acid chain: Cytokinesis protein sepH (1346 aa).

The disordered stretch occupies residues 1–50 (MVSRSNEGPEAPHPASRTPGAPAKGRLTRLGSSPSKRDDKAKDDRMGKTS). Positions 35 to 50 (SKRDDKAKDDRMGKTS) are enriched in basic and acidic residues. Residues 60 to 310 (YQLGDCLGRG…ARKLLKHPWI (251 aa)) enclose the Protein kinase domain. Residues 66–74 (LGRGAFGSV) and lysine 89 contribute to the ATP site. Aspartate 182 (proton acceptor) is an active-site residue. Disordered stretches follow at residues 342 to 380 (RSPE…PSPV), 446 to 497 (DESF…HMRR), and 1211 to 1295 (LCKL…AGAS). Polar residues-rich tracts occupy residues 477–489 (QQAN…SQNG) and 1220–1249 (RGST…NQSK).

The protein belongs to the protein kinase superfamily. Ser/Thr protein kinase family. CDC7 subfamily. Mg(2+) is required as a cofactor.

It catalyses the reaction L-seryl-[protein] + ATP = O-phospho-L-seryl-[protein] + ADP + H(+). The catalysed reaction is L-threonyl-[protein] + ATP = O-phospho-L-threonyl-[protein] + ADP + H(+). In terms of biological role, required for early events during cytokinesis including localization of cytoskeletal components to the cytokinetic ring. This chain is Cytokinesis protein sepH, found in Emericella nidulans (strain FGSC A4 / ATCC 38163 / CBS 112.46 / NRRL 194 / M139) (Aspergillus nidulans).